The primary structure comprises 108 residues: Nucleoid-associated protein GK0018 (108 aa).

A disordered region spans residues 1–32 (MMRGGMGNMQKMLKQMQKMQKEMQKAQEELAE). Residues 9–18 (MQKMLKQMQK) show a composition bias toward low complexity. The segment covering 19-32 (MQKEMQKAQEELAE) has biased composition (basic and acidic residues).

The protein belongs to the YbaB/EbfC family. In terms of assembly, homodimer.

Its subcellular location is the cytoplasm. It localises to the nucleoid. Binds to DNA and alters its conformation. May be involved in regulation of gene expression, nucleoid organization and DNA protection. This is Nucleoid-associated protein GK0018 from Geobacillus kaustophilus (strain HTA426).